A 341-amino-acid chain; its full sequence is Two-component response regulator EHD1 (341 aa).

A Response regulatory domain is found at 12–127 (RVLVIDDDCS…ELSNIWQHIF (116 aa)). Position 63 is a 4-aspartylphosphate (Asp63). The region spanning 195–254 (DLGKSRLTWTTQLHRQFIAAVNHLGEDKAVPKKILGIMKVKHLTREQVASHLQKYRMQLK) is the HTH myb-type domain. A DNA-binding region (H-T-H motif) is located at residues 225–250 (PKKILGIMKVKHLTREQVASHLQKYR).

Post-translationally, two-component system major event consists of a His-to-Asp phosphorelay between a sensor histidine kinase (HK) and a response regulator (RR). In plants, the His-to-Asp phosphorelay involves an additional intermediate named Histidine-containing phosphotransfer protein (HPt). This multistep phosphorelay consists of a His-Asp-His-Asp sequential transfer of a phosphate group between first a His and an Asp of the HK protein, followed by the transfer to a conserved His of the HPt protein and finally the transfer to an Asp in the receiver domain of the RR protein.

The protein resides in the nucleus. Its function is as follows. Transcriptional activator that acts as a floral inducer to promote short-day (SD) flowering pathway. Activates Hd3a and other FT-like genes independently from Hd1. May also activate MADS-box transcription factors involved in flowering regulation. This is Two-component response regulator EHD1 (EHD1) from Oryza sativa subsp. indica (Rice).